Reading from the N-terminus, the 303-residue chain is Ornithine carbamoyltransferase (303 aa).

Residues 52–55 (STRT), Gln79, Arg103, and 130–133 (HPCQ) contribute to the carbamoyl phosphate site. L-ornithine-binding positions include Asn161, Asp222, and 226–227 (SM). Residues 262–263 (CL) and Arg290 contribute to the carbamoyl phosphate site.

It belongs to the aspartate/ornithine carbamoyltransferase superfamily. OTCase family.

It is found in the cytoplasm. It carries out the reaction carbamoyl phosphate + L-ornithine = L-citrulline + phosphate + H(+). Its pathway is amino-acid biosynthesis; L-arginine biosynthesis; L-arginine from L-ornithine and carbamoyl phosphate: step 1/3. In terms of biological role, reversibly catalyzes the transfer of the carbamoyl group from carbamoyl phosphate (CP) to the N(epsilon) atom of ornithine (ORN) to produce L-citrulline. The protein is Ornithine carbamoyltransferase of Geobacter metallireducens (strain ATCC 53774 / DSM 7210 / GS-15).